The primary structure comprises 111 residues: Universal stress protein B (111 aa).

Transmembrane regions (helical) follow at residues 1-21 (MIST…NMAR) and 90-110 (FLLT…LMIW).

The protein belongs to the universal stress protein B family.

The protein resides in the cell inner membrane. The polypeptide is Universal stress protein B (Salmonella arizonae (strain ATCC BAA-731 / CDC346-86 / RSK2980)).